The sequence spans 176 residues: Protein KleF (176 aa).

The sequence is that of Protein KleF (kleF) from Escherichia coli.